Here is a 1310-residue protein sequence, read N- to C-terminus: MSRRKQAKPRSLKDPNCKLEDTSEDGESPDCKKRQEEGDELEEEEAVHSCDSCLQVFESLSDITEHKISQCQLTDGADIEDDPTCSWPASSPSSKDQASPIHGEGFDFGEEEGIPGLPYPCQFCDKSFSRLSYLKHHEQSHSDKLPFKCTYCSRLFKHKRSRDRHIKLHTGDKKYHCSECDASFSRSDHLKIHLKTHTSNKPYKCAICRRGFLSSSSLHGHMQVHERNKDCSQSGSRMEEWKMKDTQKCSQCEEGFDFPEDLQKHIAECHPECSPNDDRGALQCMYCHELFMEETSLLNHMEQIHNSEKKNSCNICSENFHSVEELYSHMDSHQHPESCNPSNSPSLVTVGYTSVSSTTPDSNLSVDSSTMVEVAPPLAKGRGRKRAVQQTGDAPTSKQARVSYSCIYCSKQLFSSLAVLQIHLKTMHLDKPEQAHICQYCLEVLPSLFNLNEHLKQVHETQDPALIVSTMSAMVYQCNFCSEIFNDLNMLQDHIRSSHGFPNPVTKDSNAFFCPHCYMGFLTDTSLEEHIRQVHCELGNSRFGSPVLGTPKEPVVEVYSCSYCTNSPIFNSVLKLNKHIKENHKNIPLALNYIHNGKKSRALSPLSPITLEQSSLKMMQSLGGTPSRLAGEYICNQCGAKYTSLDGFQTHLKTHLDTVLPKLTCPQCNKEFPNQESLLKHVTIHFMITSTYYICESCDKQFTSVDDLQKHLLDMHTFGFFRCTLCQEVFDSKVSIQLHLAVKHSNEKKVYRCTSCNWDFRTETDLQLHVKHNHLENQGKMHKCIFCGESFGTEVELQCHITTHSKKYNCKFCSKAFHAIILLEKHLREKHCVFEDKTQNCGTNGASEQIQKEEVELQTLLTNNQESHNSHDGSEEDIDTSEPMYGCDICGAAYTMESLLQNHQLRDHNIRPGESAIVKKKAELIKGNYKCNVCSRTFFSEGGLREHMQTHLGPVKHYMCPICGERFPSLLTLTEHKVTHSKSLDTGNCRICKLPLQCEEDFLEHCQMHPDLRNSLTGFRCVVCMQTVTSTLELKIHGTFHMQKTGTASVVQSAGRVQNLQKLYKCASCLKEFRSKQDLVKLDINGLPYGLCASCVNLSKSASPNANVTLSTNRQVISQTDSLTCVEAKNYKTSVLKTRCSSCNVKFESETELQNHIQTIHRELTSENSATQLKTPQVSPMARISPQSDEKKTYQCIKCQMVFYNEWDIQVHVANHMIDEGLNHECKLCSQTFDSPAKLQCHLIEHSFEGMGGTFKCPVCFTVFVQANKLQQHIFSAHGQEDKIYDCAQCPQKFFFQTELQNHTMSQHSS.

A compositionally biased stretch (basic residues) spans 1–10 (MSRRKQAKPR). The tract at residues 1–46 (MSRRKQAKPRSLKDPNCKLEDTSEDGESPDCKKRQEEGDELEEEEA) is disordered. Residues 11–21 (SLKDPNCKLED) show a composition bias toward basic and acidic residues. The C2H2-type 1; degenerate zinc finger occupies 48-68 (HSCDSCLQVFESLSDITEHKI). The interval 82 to 106 (DPTCSWPASSPSSKDQASPIHGEGF) is disordered. Polar residues predominate over residues 87-97 (WPASSPSSKDQ). C2H2-type zinc fingers lie at residues 119-141 (YPCQ…EQSH), 147-169 (FKCT…IKLH), 175-197 (YHCS…LKTH), 203-225 (YKCA…MQVH), 247-270 (QKCS…AECH), 282-305 (LQCM…EQIH), and 311-333 (NSCN…MDSH). The C2H2-type 9; degenerate zinc finger occupies 404-428 (YSCIYCSKQLFSSLAVLQIHLKTMH). 3 consecutive C2H2-type zinc fingers follow at residues 436–459 (HICQ…KQVH), 476–499 (YQCN…RSSH), and 512–535 (FFCP…RQVH). Residues 559-584 (YSCSYCTNSPIFNSVLKLNKHIKENH) form a C2H2-type 13; atypical zinc finger. C2H2-type zinc fingers lie at residues 633–655 (YICN…LKTH), 663–685 (LTCP…VTIH), 693–716 (YICE…LDMH), 721–744 (FRCT…AVKH), 751–774 (YRCT…KHNH), 782–804 (HKCI…ITTH), and 808–831 (YNCK…REKH). Residues 885 to 907 (YGCDICGAAYTMESLLQNHQLRD) form a C2H2-type 21; degenerate zinc finger. C2H2-type zinc fingers lie at residues 929–951 (YKCN…MQTH), 958–980 (YMCP…KVTH), and 1019–1041 (FRCV…GTFH). Residues 1064–1082 (YKCASCLKEFRSKQDLVKL) form a C2H2-type 25; degenerate zinc finger. 5 consecutive C2H2-type zinc fingers follow at residues 1138–1161 (TRCS…QTIH), 1194–1216 (YQCI…VANH), 1224–1246 (HECK…LIEH), 1255–1278 (FKCP…FSAH), and 1285–1308 (YDCA…MSQH).

It belongs to the krueppel C2H2-type zinc-finger protein family.

Its subcellular location is the nucleus. Functionally, transcription factor that can both act as an activator or a repressor depending on the context. Involved in BMP signaling and in the regulation of the immature compartment of the hematopoietic system. In Xenopus laevis (African clawed frog), this protein is Zinc finger protein 521 (znf521).